The chain runs to 311 residues: Syntaxin-111 (311 aa).

The Cytoplasmic portion of the chain corresponds to 1–284; that stretch reads MNDLMTKSFM…AREHQRSSRK (284 aa). Positions 213–275 constitute a t-SNARE coiled-coil homology domain; sequence VHEIQDRHDA…QGGNKELRKA (63 aa). The chain crosses the membrane as a helical; Anchor for type IV membrane protein span at residues 285-305; the sequence is WLCIGIIILLLLVLLVIVPIA. Residues 306–311 lie on the Vesicular side of the membrane; the sequence is TSFKRS.

The protein belongs to the syntaxin family. In terms of tissue distribution, expressed in roots and panicles.

It is found in the cell membrane. The protein localises to the cytoplasm. Functionally, vesicle trafficking protein that functions in the secretory pathway. The polypeptide is Syntaxin-111 (Oryza sativa subsp. japonica (Rice)).